Here is a 243-residue protein sequence, read N- to C-terminus: Exosome complex component Rrp41 (243 aa).

It belongs to the RNase PH family. Rrp41 subfamily. As to quaternary structure, component of the archaeal exosome complex. Forms a hexameric ring-like arrangement composed of 3 Rrp41-Rrp42 heterodimers. The hexameric ring associates with a trimer of Rrp4 and/or Csl4 subunits.

The protein resides in the cytoplasm. Its function is as follows. Catalytic component of the exosome, which is a complex involved in RNA degradation. Has 3'-&gt;5' exoribonuclease activity. Can also synthesize heteromeric RNA-tails. This is Exosome complex component Rrp41 from Cenarchaeum symbiosum (strain A).